A 262-amino-acid chain; its full sequence is Glutamate racemase (262 aa).

Residues 7 to 8 and 39 to 40 contribute to the substrate site; these read DS and YG. The Proton donor/acceptor role is filled by Cys70. 71–72 is a binding site for substrate; it reads NT. Residue Cys182 is the Proton donor/acceptor of the active site. 183–184 contacts substrate; that stretch reads TH.

It belongs to the aspartate/glutamate racemases family.

The catalysed reaction is L-glutamate = D-glutamate. It participates in cell wall biogenesis; peptidoglycan biosynthesis. Its function is as follows. Provides the (R)-glutamate required for cell wall biosynthesis. The protein is Glutamate racemase of Campylobacter concisus (strain 13826).